The sequence spans 602 residues: Aspartate--tRNA(Asp/Asn) ligase (602 aa).

An L-aspartate-binding site is contributed by Glu-176. The aspartate stretch occupies residues 200-203 (QQFK). L-aspartate-binding residues include Arg-222 and His-452. 222 to 224 (RDE) is a binding site for ATP. Glu-490 is an ATP binding site. An L-aspartate-binding site is contributed by Arg-497. ATP is bound at residue 542–545 (GIDR).

The protein belongs to the class-II aminoacyl-tRNA synthetase family. Type 1 subfamily. In terms of assembly, homodimer.

The protein resides in the cytoplasm. The enzyme catalyses tRNA(Asx) + L-aspartate + ATP = L-aspartyl-tRNA(Asx) + AMP + diphosphate. Aspartyl-tRNA synthetase with relaxed tRNA specificity since it is able to aspartylate not only its cognate tRNA(Asp) but also tRNA(Asn). Reaction proceeds in two steps: L-aspartate is first activated by ATP to form Asp-AMP and then transferred to the acceptor end of tRNA(Asp/Asn). This Rickettsia africae (strain ESF-5) protein is Aspartate--tRNA(Asp/Asn) ligase.